Here is a 396-residue protein sequence, read N- to C-terminus: Chorismate synthase (396 aa).

Positions 40 and 46 each coordinate NADP(+). Residues 134–136 (RSS), 257–258 (QA), Gly-302, 317–321 (KPIPS), and Arg-343 contribute to the FMN site.

This sequence belongs to the chorismate synthase family. As to quaternary structure, homotetramer. The cofactor is FMNH2.

It carries out the reaction 5-O-(1-carboxyvinyl)-3-phosphoshikimate = chorismate + phosphate. It functions in the pathway metabolic intermediate biosynthesis; chorismate biosynthesis; chorismate from D-erythrose 4-phosphate and phosphoenolpyruvate: step 7/7. Its function is as follows. Catalyzes the anti-1,4-elimination of the C-3 phosphate and the C-6 proR hydrogen from 5-enolpyruvylshikimate-3-phosphate (EPSP) to yield chorismate, which is the branch point compound that serves as the starting substrate for the three terminal pathways of aromatic amino acid biosynthesis. This reaction introduces a second double bond into the aromatic ring system. In Bifidobacterium animalis subsp. lactis (strain AD011), this protein is Chorismate synthase.